Here is a 161-residue protein sequence, read N- to C-terminus: Phenolic acid decarboxylase PadC (161 aa).

Residues Tyr11 and Tyr13 each contribute to the substrate site. The active-site Proton donor is the Tyr19. Arg41 serves as a coordination point for substrate. Glu64 serves as the catalytic Proton acceptor.

Belongs to the PadC family. In terms of assembly, homodimer.

It carries out the reaction (E)-4-coumarate + H(+) = 4-vinylphenol + CO2. It catalyses the reaction (E)-cinnamate + H(+) = styrene + CO2. The enzyme catalyses (E)-ferulate + H(+) = 2-methoxy-4-vinylphenol + CO2. Functionally, involved in the decarboxylation and detoxification of phenolic derivatives. It is able to catalyze the decarboxylation of ferulic, p-coumaric and caffeic acids. The protein is Phenolic acid decarboxylase PadC (padC) of Bacillus subtilis (strain 168).